Here is a 225-residue protein sequence, read N- to C-terminus: Leucyl/phenylalanyl-tRNA--protein transferase (225 aa).

The protein belongs to the L/F-transferase family.

It is found in the cytoplasm. The catalysed reaction is N-terminal L-lysyl-[protein] + L-leucyl-tRNA(Leu) = N-terminal L-leucyl-L-lysyl-[protein] + tRNA(Leu) + H(+). It carries out the reaction N-terminal L-arginyl-[protein] + L-leucyl-tRNA(Leu) = N-terminal L-leucyl-L-arginyl-[protein] + tRNA(Leu) + H(+). It catalyses the reaction L-phenylalanyl-tRNA(Phe) + an N-terminal L-alpha-aminoacyl-[protein] = an N-terminal L-phenylalanyl-L-alpha-aminoacyl-[protein] + tRNA(Phe). In terms of biological role, functions in the N-end rule pathway of protein degradation where it conjugates Leu, Phe and, less efficiently, Met from aminoacyl-tRNAs to the N-termini of proteins containing an N-terminal arginine or lysine. This is Leucyl/phenylalanyl-tRNA--protein transferase from Gluconobacter oxydans (strain 621H) (Gluconobacter suboxydans).